A 567-amino-acid chain; its full sequence is Hexose transporter HXT16 (567 aa).

Over residues 1–19 the composition is skewed to polar residues; it reads MASEQSSPEINADNLNSSA. The segment at 1–32 is disordered; it reads MASEQSSPEINADNLNSSAADVHVQPPGEKEW. The Cytoplasmic portion of the chain corresponds to 1 to 55; it reads MASEQSSPEINADNLNSSAADVHVQPPGEKEWSDGFYDKEVINGNTPDAPKRGFL. The chain crosses the membrane as a helical span at residues 56-76; it reads GYLIIYLLCYPVSFGGFLPGW. The Extracellular portion of the chain corresponds to 77-112; the sequence is DSGITAGFINMDNFKMNFGSYKHSTGEYYLSNVRMG. A helical transmembrane segment spans residues 113-133; it reads LLVAMFSVGCSIGGVAFARLA. At 134 to 139 the chain is on the cytoplasmic side; the sequence is DTLGRR. The helical transmembrane segment at 140–160 threads the bilayer; sequence LAIVIVVLVYMVGAIIQISSN. The Extracellular portion of the chain corresponds to 161–170; that stretch reads HKWYQYFVGK. A helical membrane pass occupies residues 171 to 191; the sequence is IIYGLGAGGCSVLCPMLLSEI. Over 192-197 the chain is Cytoplasmic; sequence APTDLR. Residues 198–218 traverse the membrane as a helical segment; sequence GGLVSLYQLNMTFGIFLGYCS. The Extracellular segment spans residues 219–232; sequence VYGTRKYSNTAQWR. The chain crosses the membrane as a helical span at residues 233-253; that stretch reads IPVGLCFLWALIIIVGMLLVP. Residues 254–336 are Cytoplasmic-facing; that stretch reads ESPRYLIECE…VQTFLQLTGE (83 aa). A helical transmembrane segment spans residues 337 to 353; the sequence is NYFFFYGTTIFKSVGLT. Over 354–359 the chain is Extracellular; it reads DGFETS. A helical membrane pass occupies residues 360–377; that stretch reads IVLGTVNFFSTIIAVMVV. Over 378–384 the chain is Cytoplasmic; that stretch reads DKIGRRK. The helical transmembrane segment at 385–405 threads the bilayer; the sequence is CLLFGAASMMACMVIFASIGV. The Extracellular portion of the chain corresponds to 406–427; it reads KCLYPHGQDGPSSKGAGNAMIV. A helical membrane pass occupies residues 428-448; it reads FTCFYIFCFATTWAPVAYIVV. Topologically, residues 449 to 465 are cytoplasmic; sequence AESFPSKVKSKAMSIST. A helical membrane pass occupies residues 466–486; it reads AFNWLWQFLIGFFTPFITGSI. Position 487 (His487) is a topological domain, extracellular. Residues 488 to 508 traverse the membrane as a helical segment; sequence FYYGYVFVGCLVAMFLYVFFF. Topologically, residues 509 to 567 are cytoplasmic; sequence LPETIGLSLEETQLLYEEGIKPWKSASWVPPSRRGASSRETEAKKKSWKEVLKFPKSFN. Residues 533–555 are disordered; sequence SASWVPPSRRGASSRETEAKKKS. A compositionally biased stretch (basic and acidic residues) spans 545–555; that stretch reads SSRETEAKKKS.

It belongs to the major facilitator superfamily. Sugar transporter (TC 2.A.1.1) family.

It is found in the membrane. Probable glucose transporter. The polypeptide is Hexose transporter HXT16 (HXT16) (Saccharomyces cerevisiae (strain ATCC 204508 / S288c) (Baker's yeast)).